The chain runs to 96 residues: Evasin P1074 (96 aa).

Residues 1–28 (MAFNMITFLQMAVFVVILFNINLHSASA) form the signal peptide. 3 cysteine pairs are disulfide-bonded: Cys-48–Cys-67, Cys-52–Cys-69, and Cys-63–Cys-80. N-linked (GlcNAc...) asparagine glycosylation is present at Asn-74.

The protein resides in the secreted. Its function is as follows. Salivary chemokine-binding protein which binds to host chemokines CXCL1 and CXCL8. The polypeptide is Evasin P1074 (Ixodes ricinus (Common tick)).